The following is a 339-amino-acid chain: MIFIDACFRKETPYTPIWMMRQAGRYLSEYQESRKKAGSFLELCKNSDLATEVTLQPVEILGVDAAILFSDILVVPLEMGLNLEFIPKKGPHFLETITDLKSVESLKVGAYKQLNYVYDTISQTRQKLSREKALIGFCGSPWTLATYMIEGEGSKSYAKSKKMLYSEPEVLKALLEKLSLELIEYLSLQIQAGVNAVMIFDSWASALEKEAYLKFSWDYLKKISKELKKRYAHIPVILFPKGIGAYLDSIDGEFDVFGVDWGTPLTAAKKILGGKYVLQGNLEPTRLYDKNALEEGVETILKVMGNQGHIFNLGHGMLPDLPRENAKYLVQLVHAKTRR.

Substrate-binding positions include 21–25 (RQAGR), F40, D71, Y147, S202, and H315.

Belongs to the uroporphyrinogen decarboxylase family. In terms of assembly, homodimer.

The protein localises to the cytoplasm. It catalyses the reaction uroporphyrinogen III + 4 H(+) = coproporphyrinogen III + 4 CO2. The protein operates within porphyrin-containing compound metabolism; protoporphyrin-IX biosynthesis; coproporphyrinogen-III from 5-aminolevulinate: step 4/4. In terms of biological role, catalyzes the decarboxylation of four acetate groups of uroporphyrinogen-III to yield coproporphyrinogen-III. In Helicobacter pylori (strain ATCC 700392 / 26695) (Campylobacter pylori), this protein is Uroporphyrinogen decarboxylase.